The chain runs to 276 residues: Aquaporin-1 (276 aa).

Topologically, residues 1–10 (MLDAEQKKNY) are cytoplasmic. A helical membrane pass occupies residues 11-31 (VAGAFGEFVGTAYFLFMGVGG). The Extracellular portion of the chain corresponds to 32–46 (AVNFLNNAAGSPLPG). The chain crosses the membrane as a helical span at residues 47–67 (FAIPFCFGFSLFVNVFIWAPI). Residues 68–93 (SGGVFNPSITIALMATNPKDFPWYRG) are Cytoplasmic-facing. The NPA 1 signature appears at 73–75 (NPS). Residues 94–114 (ILYIVSQFLGALFGSWLIDLI) traverse the membrane as a helical segment. Residues 115-133 (QPEAPNAATLLADGVSVAQ) lie on the Extracellular side of the membrane. A helical membrane pass occupies residues 134–154 (GLFMEMFATSVLTMAVLILAG). At 155–159 (ERYGK) the chain is on the cytoplasmic side. The chain crosses the membrane as a helical span at residues 160–180 (YLAPFGIGMSLFISALCAGPY). Over 181–204 (TGASLNPARTLGPAIVANQYGRAH) the chain is Extracellular. Residues 186–188 (NPA) carry the NPA 2 motif. A helical membrane pass occupies residues 205 to 225 (WIYYVGPTLGSLLAAGYWHIL). Residues 226-276 (RILNIDVVDLKNVLNKCKKCGKEDPRISLKHCEECLKDDPKPEKYDIESQN) are Cytoplasmic-facing.

Belongs to the MIP/aquaporin (TC 1.A.8) family.

The protein resides in the cell membrane. It catalyses the reaction H2O(in) = H2O(out). Its activity is regulated as follows. Polyethylene glycol (PEG) stimulates whereas glycerol inhibits the aquaporin activity. In terms of biological role, water channel required to facilitate the transport of water across membranes. Stimulates plant drought tolerance by facilitating the transport of water from the arbuscular mycorrhiza fungus to host plants. The sequence is that of Aquaporin-1 from Rhizophagus irregularis (Arbuscular mycorrhizal fungus).